We begin with the raw amino-acid sequence, 536 residues long: Prickle planar cell polarity protein 3-B (536 aa).

Positions 66 to 175 (SGSQRDSLCD…CVRPISGTMS (110 aa)) constitute a PET domain. 3 consecutive LIM zinc-binding domains span residues 177-241 (TVCQ…ELKR), 242-302 (PRCL…LYAQ), and 305-366 (DSCG…HTKS). A disordered region spans residues 418-536 (PTQAAPARSL…KKKDKSCFLS (119 aa)). A compositionally biased stretch (basic and acidic residues) spans 438-448 (FSRECPNRRSL). Positions 450–467 (DLSSHTRTPTRVTFQLPS) are enriched in polar residues. Over residues 474-487 (SISFSRPSFTSSSS) the composition is skewed to low complexity.

The protein belongs to the prickle / espinas / testin family. As to quaternary structure, interacts with vangl2 via its C-terminus. The vangl2-dependent membrane recruitment of prickle3 is a prerequisite for its polarization. Interacts with wtip. Wtip is involved in the recruitment of prickle3 to the basal body.

Its subcellular location is the cytoplasm. The protein localises to the cell membrane. The protein resides in the mitochondrion. Its function is as follows. Involved in the planar cell polarity (PCP) pathway that is essential for the polarization of epithelial cells during morphogenetic processes, including gastrulation and neurulation. PCP is maintained by two molecular modules, the global and the core modules. Proteins of the core module include the proteins Frizzled (Fz), Disheveled (Dsh), Van Gogh (Vang), Prickle (Pk), Flamingo (Fmi, Celsr) and Diego (Dgo). The core module proteins develop subcellular asymmetry, accumulating in two groups on opposite sides of epithelial cells. Distinct proximal (Vang, Pk and Fmi) and distal (Fz, Dsh, Dgo and Fmi) complexes segregate to opposite sides of the cell, where they interact with the opposite complex in the neighboring cell at or near the adherents junctions. Directional information to orient polarization with respect to the tissue axes is provided by the global module which involves Wnt proteins. Involved in the organization of the basal body. Involved in cilia growth and positioning. Required for proper assembly, stability, and function of mitochondrial membrane ATP synthase (mitochondrial complex V). The sequence is that of Prickle planar cell polarity protein 3-B (prickle3-b) from Xenopus laevis (African clawed frog).